We begin with the raw amino-acid sequence, 274 residues long: Indole-3-glycerol phosphate synthase (274 aa).

It belongs to the TrpC family.

It catalyses the reaction 1-(2-carboxyphenylamino)-1-deoxy-D-ribulose 5-phosphate + H(+) = (1S,2R)-1-C-(indol-3-yl)glycerol 3-phosphate + CO2 + H2O. Its pathway is amino-acid biosynthesis; L-tryptophan biosynthesis; L-tryptophan from chorismate: step 4/5. The protein is Indole-3-glycerol phosphate synthase of Kineococcus radiotolerans (strain ATCC BAA-149 / DSM 14245 / SRS30216).